The primary structure comprises 133 residues: Putative HTH-type transcriptional regulator YwnA (133 aa).

The HTH rrf2-type domain maps to 1-130 (MINSRLAVAI…ASKSLKDVMN (130 aa)). Residues 24 to 47 (SEIIADSVNTNPVVVRRMISLLKK) constitute a DNA-binding region (H-T-H motif).

This is Putative HTH-type transcriptional regulator YwnA (ywnA) from Bacillus subtilis (strain 168).